The primary structure comprises 244 residues: Venom nerve growth factor 3 (244 aa).

An N-terminal signal peptide occupies residues 1–18; that stretch reads MSMLCYTLIIAFLIGIWA. Positions 19 to 125 are excised as a propeptide; the sequence is APKSEDNVPL…TLNRNIRAKR (107 aa). Positions 47–66 are enriched in basic and acidic residues; it reads GLKTSRNTDQRHPAPKKAED. The tract at residues 47 to 67 is disordered; it reads GLKTSRNTDQRHPAPKKAEDQ. 3 disulfides stabilise this stretch: cysteine 139-cysteine 205, cysteine 181-cysteine 233, and cysteine 193-cysteine 235.

The protein belongs to the NGF-beta family. In terms of assembly, homodimer; non-covalently linked. In terms of tissue distribution, expressed by the venom gland.

Its subcellular location is the secreted. In terms of biological role, nerve growth factor is important for the development and maintenance of the sympathetic and sensory nervous systems. It stimulates division and differentiation of sympathetic and embryonic sensory neurons as well as basal forebrain cholinergic neurons in the brain. Its relevance in the snake venom is not clear. However, it has been shown to inhibit metalloproteinase-dependent proteolysis of platelet glycoprotein Ib alpha, suggesting a metalloproteinase inhibition to prevent metalloprotease autodigestion and/or protection against prey proteases. Binds a lipid between the two protein chains in the homodimer. The lipid-bound form promotes histamine relase from mouse mast cells, contrary to the lipid-free form. This is Venom nerve growth factor 3 from Notechis scutatus scutatus (Mainland tiger snake).